Reading from the N-terminus, the 396-residue chain is Putative 2-hydroxyacid dehydrogenase YPL113C (396 aa).

NAD(+) is bound by residues 227 to 228 (SI), 311 to 313 (VGR), and Asp-337. Residue Arg-313 is part of the active site. Residue Glu-342 is part of the active site. Catalysis depends on His-361, which acts as the Proton donor. 361 to 364 (HIGS) contributes to the NAD(+) binding site.

Belongs to the D-isomer specific 2-hydroxyacid dehydrogenase family.

Putative 2-hydroxyacid dehydrogenase. The protein is Putative 2-hydroxyacid dehydrogenase YPL113C of Saccharomyces cerevisiae (strain ATCC 204508 / S288c) (Baker's yeast).